A 408-amino-acid polypeptide reads, in one-letter code: Aminoacylase-1B (408 aa).

H80 serves as a coordination point for Zn(2+). The active site involves D82. D113 contacts Zn(2+). The active-site Proton acceptor is E147. E148, E175, and H373 together coordinate Zn(2+). A Phosphoserine modification is found at S408.

It belongs to the peptidase M20A family. In terms of assembly, homodimer. Requires Zn(2+) as cofactor. As to expression, expressed in kidney.

It is found in the cytoplasm. It carries out the reaction an N-acyl-L-amino acid + H2O = an L-alpha-amino acid + a carboxylate. The enzyme catalyses an N-acetyl-L-cysteine-S-conjugate + H2O = an S-substituted L-cysteine + acetate. In terms of biological role, involved in the hydrolysis of N-acylated or N-acetylated amino acids (except L-aspartate). In Rattus norvegicus (Rat), this protein is Aminoacylase-1B (Acy1b).